The sequence spans 198 residues: Small ribosomal subunit protein uS4 (198 aa).

In terms of domain architecture, S4 RNA-binding spans 91–154 (SRLDNVVYRL…KNLNIVQEAL (64 aa)).

It belongs to the universal ribosomal protein uS4 family. Part of the 30S ribosomal subunit. Contacts protein S5. The interaction surface between S4 and S5 is involved in control of translational fidelity.

One of the primary rRNA binding proteins, it binds directly to 16S rRNA where it nucleates assembly of the body of the 30S subunit. Its function is as follows. With S5 and S12 plays an important role in translational accuracy. This is Small ribosomal subunit protein uS4 from Aster yellows witches'-broom phytoplasma (strain AYWB).